Consider the following 433-residue polypeptide: Myricetin 3-O-glucosyl 1,2-rhamnoside 6'-O-caffeoyltransferase AT2 (433 aa).

Residues histidine 157 and aspartate 375 each act as proton acceptor in the active site.

Belongs to the plant acyltransferase family. In terms of tissue distribution, expressed in young cromes.

It catalyses the reaction myricetin 3-O-[beta-D-glucosyl-(1-&gt;2)-alpha-L-rhamnoside] + (E)-caffeoyl-CoA = myricetin 3-O-[(6-O-(E)-caffeoyl-beta-D-glucosyl)-(1-&gt;2)-alpha-L-rhamnoside] + CoA. The protein operates within flavonoid metabolism. Its function is as follows. Caffeoyltransferase involved in montbretin A (MbA) biosynthesis. Catalyzes the caffeoylation of myricetin 3-O-beta-D-glucosyl 1,2-alpha-L-rhamnoside (MRG) to produce myricetin 3-O-(6'-O-caffeoyl)-beta-D-glucosyl 1,2-alpha-L-rhamnoside (mini-MbA), a precursor of MbA. Mini-MbA and MbA are potent inhibitors of human pancreatic alpha-amylase and are being developed as drug candidates to treat type-2 diabetes. In vitro, is able to catalyze the caffeoylation of quercetin 3-O-sophoroside (QGG), although QGG may not be a physiological substrate in vivo. In vitro, can use coumaryl-CoA, feruloyl-CoA and acetyl-CoA, although these three acyl donors may not be physiological in vivo. This chain is Myricetin 3-O-glucosyl 1,2-rhamnoside 6'-O-caffeoyltransferase AT2, found in Crocosmia x crocosmiiflora (Montbretia).